Consider the following 153-residue polypeptide: Cytochrome c-type biogenesis protein CcmE (153 aa).

The Cytoplasmic portion of the chain corresponds to 1 to 6 (MNARRR). The helical; Signal-anchor for type II membrane protein transmembrane segment at 7-27 (LWSVLMLILAVGTAATLTIMA) threads the bilayer. Topologically, residues 28–153 (LRHNLTYLYM…LDTPIAETTP (126 aa)) are periplasmic. The heme site is built by histidine 121 and tyrosine 125. Residues 131–141 (ANKMQPTPTQH) are compositionally biased toward polar residues. Positions 131 to 153 (ANKMQPTPTQHTHLDTPIAETTP) are disordered.

It belongs to the CcmE/CycJ family.

It is found in the cell inner membrane. Heme chaperone required for the biogenesis of c-type cytochromes. Transiently binds heme delivered by CcmC and transfers the heme to apo-cytochromes in a process facilitated by CcmF and CcmH. In Xylella fastidiosa (strain Temecula1 / ATCC 700964), this protein is Cytochrome c-type biogenesis protein CcmE.